Reading from the N-terminus, the 37-residue chain is Large ribosomal subunit protein bL36A (37 aa).

Belongs to the bacterial ribosomal protein bL36 family.

The protein is Large ribosomal subunit protein bL36A of Clavibacter sepedonicus (Clavibacter michiganensis subsp. sepedonicus).